Here is a 341-residue protein sequence, read N- to C-terminus: Trans-3-hydroxy-L-proline dehydratase (341 aa).

S90 acts as the Proton acceptor in catalysis. Substrate-binding positions include 91–92, D252, and 257–258; these read GS and GT.

This sequence belongs to the proline racemase family.

It catalyses the reaction trans-3-hydroxy-L-proline = 1-pyrroline-2-carboxylate + H2O. Catalyzes the dehydration of trans-3-hydroxy-L-proline (t3LHyp) to Delta(1)-pyrroline-2-carboxylate (Pyr2C). May be involved in a degradation pathway of t3LHyp, which would allow L.aggregata to grow on t3LHyp as a sole carbon source. Displays neither proline racemase activity nor 4-hydroxyproline 2-epimerase activity. This chain is Trans-3-hydroxy-L-proline dehydratase, found in Roseibium aggregatum (strain ATCC 25650 / DSM 13394 / JCM 20685 / NBRC 16684 / NCIMB 2208 / IAM 12614 / B1) (Stappia aggregata).